The following is a 636-amino-acid chain: Chaperone protein DnaK (636 aa).

T198 bears the Phosphothreonine; by autocatalysis mark. A compositionally biased stretch (low complexity) spans Q602–A613. The tract at residues Q602–K636 is disordered. A compositionally biased stretch (basic and acidic residues) spans H614–D625. Residues A626–K636 are compositionally biased toward acidic residues.

This sequence belongs to the heat shock protein 70 family.

In terms of biological role, acts as a chaperone. The sequence is that of Chaperone protein DnaK from Geotalea daltonii (strain DSM 22248 / JCM 15807 / FRC-32) (Geobacter daltonii).